Consider the following 165-residue polypeptide: Small ribosomal subunit protein uS17c (165 aa).

The transit peptide at 1 to 57 (MSLSFSLLKPPLSSSNPNPFLHGTTTKLSLLPSFSALSLSSSPPSSSTTYTFPVIKA) directs the protein to the chloroplast. The segment at 128–165 (AVAPEGRQSSATRPKPIQAASDELGIPLESQVEGDKTV) is disordered.

Component of the chloroplast small ribosomal subunit (SSU). Mature 70S chloroplast ribosomes of higher plants consist of a small (30S) and a large (50S) subunit. The 30S small subunit contains 1 molecule of ribosomal RNA (16S rRNA) and 24 different proteins. The 50S large subunit contains 3 rRNA molecules (23S, 5S and 4.5S rRNA) and 33 different proteins.

It is found in the plastid. The protein resides in the chloroplast. Functionally, component of the chloroplast ribosome (chloro-ribosome), a dedicated translation machinery responsible for the synthesis of chloroplast genome-encoded proteins, including proteins of the transcription and translation machinery and components of the photosynthetic apparatus. The sequence is that of Small ribosomal subunit protein uS17c (RPS17) from Spinacia oleracea (Spinach).